Consider the following 910-residue polypeptide: Eukaryotic translation initiation factor 3 subunit C (910 aa).

Residues 1-21 are disordered; the sequence is MSRFFANGSDSESESSEDEIQ. Acidic residues predominate over residues 11–20; the sequence is SESESSEDEI. Residues S34, S165, S176, and S185 each carry the phosphoserine modification. The segment at 157–281 is disordered; that stretch reads FREAPDQESE…KRAEDDEDGE (125 aa). Positions 162–186 are enriched in acidic residues; that stretch reads DQESEAEDEVVAQESDGGDAGDDSD. Positions 193–207 are enriched in low complexity; that stretch reads EAAPKAVKSAPAKAA. The segment covering 209–235 has biased composition (acidic residues); that stretch reads ADDDDSDDSIDWDSDSESETESSDDEN. A compositionally biased stretch (basic and acidic residues) spans 240–268; the sequence is MRERFLKRTTEKEEKDDDKRKDKRKEQKV. The region spanning 639–815 is the PCI domain; it reads FHMHINLELL…ETVVMHRSEP (177 aa). A disordered region spans residues 847–910; sequence FFQRGNMGNR…QQQVQTIDEE (64 aa). The span at 862–874 shows a compositional bias: low complexity; that stretch reads NRNQNNQGGNWLG. Over residues 882-891 the composition is skewed to basic residues; sequence RNRNQRGHHK. The segment covering 895-910 has biased composition (low complexity); sequence DRQQQQQQQVQTIDEE.

This sequence belongs to the eIF-3 subunit C family. In terms of assembly, component of the eukaryotic translation initiation factor 3 (eIF-3) complex. The eIF-3 complex interacts with pix.

It localises to the cytoplasm. Component of the eukaryotic translation initiation factor 3 (eIF-3) complex, which is involved in protein synthesis of a specialized repertoire of mRNAs and, together with other initiation factors, stimulates binding of mRNA and methionyl-tRNAi to the 40S ribosome. The eIF-3 complex specifically targets and initiates translation of a subset of mRNAs involved in cell proliferation. In Drosophila yakuba (Fruit fly), this protein is Eukaryotic translation initiation factor 3 subunit C.